Consider the following 331-residue polypeptide: MTFEVGVVGAGAWGTALAQMLSSDGREVLLWARESEVVREINEDRRNGPFLPSACLNPTITATADLADMARIPVLLLVTPAQHLASVLGGIGRDGGDVVLCSKGIEAGTGRLMADVARDAAPDASIAVLSGPTFAHEVADGLPTAVTLACAGGEEQWLRLSTAIARPTFRPYYSDDVTGAEIGGAVKNVLAIACGVVEGLRLGQNARAALISRGFAEMQRFGLALGARPKTLSGLSGLGDLVLTCSSTSSRNFSLGKALGEGASATAVMADRATVAEGAFTAPVLADLARGRGISMPIVEAVVTLLEGAAPAREVVAGLLSRPLTAENPLV.

NADPH is bound by residues tryptophan 13, arginine 33, and lysine 103. Residues lysine 103, glycine 131, and threonine 133 each coordinate sn-glycerol 3-phosphate. Alanine 135 is an NADPH binding site. The sn-glycerol 3-phosphate site is built by lysine 187, aspartate 240, serine 250, arginine 251, and asparagine 252. Lysine 187 serves as the catalytic Proton acceptor. Arginine 251 is a binding site for NADPH. The NADPH site is built by valine 275 and glutamate 277.

It belongs to the NAD-dependent glycerol-3-phosphate dehydrogenase family.

The protein localises to the cytoplasm. The enzyme catalyses sn-glycerol 3-phosphate + NAD(+) = dihydroxyacetone phosphate + NADH + H(+). It carries out the reaction sn-glycerol 3-phosphate + NADP(+) = dihydroxyacetone phosphate + NADPH + H(+). The protein operates within membrane lipid metabolism; glycerophospholipid metabolism. In terms of biological role, catalyzes the reduction of the glycolytic intermediate dihydroxyacetone phosphate (DHAP) to sn-glycerol 3-phosphate (G3P), the key precursor for phospholipid synthesis. The polypeptide is Glycerol-3-phosphate dehydrogenase [NAD(P)+] (Novosphingobium aromaticivorans (strain ATCC 700278 / DSM 12444 / CCUG 56034 / CIP 105152 / NBRC 16084 / F199)).